Consider the following 201-residue polypeptide: Small ribosomal subunit protein uS4c (201 aa).

Residues 89-150 form the S4 RNA-binding domain; that stretch reads MRLDNIVFRL…RQKSQAIITK (62 aa).

It belongs to the universal ribosomal protein uS4 family. As to quaternary structure, part of the 30S ribosomal subunit. Contacts protein S5. The interaction surface between S4 and S5 is involved in control of translational fidelity.

Its subcellular location is the plastid. It is found in the chloroplast. In terms of biological role, one of the primary rRNA binding proteins, it binds directly to 16S rRNA where it nucleates assembly of the body of the 30S subunit. With S5 and S12 plays an important role in translational accuracy. This chain is Small ribosomal subunit protein uS4c (rps4), found in Physcomitrium patens (Spreading-leaved earth moss).